The sequence spans 226 residues: uncharacterized protein (226 aa).

The N-acetyltransferase domain occupies 75–226 (YTIRNVTKDD…KGWLRMVKRI (152 aa)).

Belongs to the acetyltransferase family.

This is an uncharacterized protein from Methanocaldococcus jannaschii (strain ATCC 43067 / DSM 2661 / JAL-1 / JCM 10045 / NBRC 100440) (Methanococcus jannaschii).